The sequence spans 484 residues: Pre-glycoprotein polyprotein GP complex (484 aa).

Gly-2 carries N-myristoyl glycine; by host lipidation. At 2-17 (GQLVSFFQEIPNIIQE) the chain is on the extracellular side. Residues 18 to 33 (AINIALIAVSLIAILK) traverse the membrane as a helical segment. The Cytoplasmic segment spans residues 34 to 58 (GLVNLWKSGLFQLLVFLILAGRSCS). Cys-57 is a Zn(2+) binding site. At 59–423 (FKIGRSTELQ…QGKTPITLVD (365 aa)) the chain is on the extracellular side. Disulfide bonds link Cys-85-Cys-225, Cys-270-Cys-283, Cys-292-Cys-301, and Cys-355-Cys-376. N-linked (GlcNAc...) asparagine; by host glycans are attached at residues Asn-88, Asn-125, Asn-178, and Asn-218. Residues Asn-356, Asn-364, Asn-381, and Asn-386 are each glycosylated (N-linked (GlcNAc...) asparagine; by host). The chain crosses the membrane as a helical span at residues 424 to 444 (ICFWSTLFFTTTLFLHLVGFP). Residues 445–484 (THRHIQGEPCPLPHKLNSNGGCRCGRYPELKKPTTWHRKH) lie on the Cytoplasmic side of the membrane. Zn(2+)-binding residues include His-446, His-448, Cys-454, His-458, Cys-466, Cys-468, and His-484.

Belongs to the arenaviridae GPC protein family. As to quaternary structure, interacts with glycoprotein G2. Part of the GP complex (GP-C) together with glycoprotein G1 and glycoprotein G2. The GP-complex interacts with protein Z, which interacts with ribonucleocapsid; these interactions may induce virion budding. Homotrimer; disulfide-linked. In pre-fusion state, G1 homotrimers bind G2 homotrimers via ionic interactions. Part of the GP complex (GP-C) together with glycoprotein G2 and the stable signal peptide. The GP-complex interacts with protein Z, which interacts with ribonucleocapsid; these interactions may induce virion budding. In terms of assembly, homotrimer. Interacts with the stable signal peptide. In pre-fusion state, G2 homotrimers bind G1 homotrimers via ionic interactions. Part of the GP complex (GP-C) together with glycoprotein G1 and the stable signal peptide. Acidification in the endosome triggers rearrangements, which ultimately leads to a 6 helix bundle formed by the two heptad repeat domains (HR1 and HR2) in post-fusion state. The GP-complex interacts with protein Z, which interacts with ribonucleocapsid; these interactions may induce virion budding. Post-translationally, specific enzymatic cleavages in vivo yield mature proteins. GP-C polyprotein is cleaved in the endoplasmic reticulum by the host protease MBTPS1. Only cleaved glycoprotein is incorporated into virions. The SSP remains stably associated with the GP complex following cleavage by signal peptidase and plays crucial roles in the trafficking of GP through the secretory pathway. In terms of processing, myristoylation is necessary for GP2-mediated fusion activity.

It localises to the virion membrane. The protein localises to the host endoplasmic reticulum membrane. Its subcellular location is the host Golgi apparatus membrane. It is found in the host cell membrane. Functionally, functions as a cleaved signal peptide that is retained as the third component of the GP complex (GP-C). Helps to stabilize the spike complex in its native conformation. The SSP is required for efficient glycoprotein expression, post-translational maturation cleavage of G1 and G2, glycoprotein transport to the cell surface plasma membrane, formation of infectious virus particles, and acid pH-dependent glycoprotein-mediated cell fusion. Its function is as follows. Glycoprotein G1: Forms the virion spikes together with glycoprotein G2. The glycoprotein spike trimers are connected to the underlying matrix. Interacts with the host receptor leading to virus endocytosis. In terms of biological role, forms the virion spikes together with glycoprotein G1. The glycoprotein spike trimers are connected to the underlying matrix. Class I viral fusion protein that directs fusion of viral and host endosomal membranes, leading to delivery of the nucleocapsid into the cytoplasm. Membrane fusion is mediated by irreversible conformational changes induced by acidification. In Chapare mammarenavirus (isolate Human/Bolivia/810419/2003), this protein is Pre-glycoprotein polyprotein GP complex.